We begin with the raw amino-acid sequence, 315 residues long: MKNIIRHFSKPAYREEFKEDTSPRTAEYKSVSEDSSTGLTYTLPPKAKFGKMSIALICFLIVSCNCFASEPLPWQVTFQPPASPIMEELHHFHNFLLYISTAIVLFVAGLLGFVCIRFNAKNNPVPAKFSHNVLIEIIWTVIPIIILVIIAVPSFKILRHAEKIPKTDLTIKVVGYQWYWHYIYPDHDNLEFDSVMISDENLKPNHKRLLDVDNRIVIPENATVRFLITAGDVIHSFAVPSLGFKIDAVPGRINETWTRVAKKGVYYGQCSELCGIHHGFMPIAIEVVSKEDFDNWIASKNKTAMNGKKPKLVAN.

The next 3 membrane-spanning stretches (helical) occupy residues 54 to 74 (IALICFLIVSCNCFASEPLPW), 96 to 116 (LLYISTAIVLFVAGLLGFVCI), and 133 to 153 (VLIEIIWTVIPIIILVIIAVP). Positions 235, 270, 274, and 278 each coordinate Cu cation.

This sequence belongs to the cytochrome c oxidase subunit 2 family. The cofactor is Cu cation. Requires heme as cofactor.

It localises to the cell membrane. The enzyme catalyses 4 Fe(II)-[cytochrome c] + O2 + 8 H(+)(in) = 4 Fe(III)-[cytochrome c] + 2 H2O + 4 H(+)(out). Functionally, subunits I and II form the functional core of the enzyme complex. Electrons originating in cytochrome c are transferred via heme a and Cu(A) to the binuclear center formed by heme a3 and Cu(B). The protein is Probable cytochrome c oxidase subunit 2 (ctaC) of Rickettsia conorii (strain ATCC VR-613 / Malish 7).